Reading from the N-terminus, the 267-residue chain is Apolipoprotein A-I (267 aa).

A signal peptide spans 1–18; that stretch reads MKATVLTLAVLFLTGSQA. A run of 2 repeats spans residues 68–89 and 90–111. Residues 68-267 form a 10 X approximate tandem repeats region; sequence LKLLDNWDSV…EEYTKKLSTQ (200 aa). M110 is modified (methionine sulfoxide). The stretch at 112–122 is one 3; half-length repeat; it reads KDLEEVKAKVQ. Repeat copies occupy residues 123–144, 145–166, 167–188, 189–210, and 211–232. M136 is subject to Methionine sulfoxide. A 9; half-length repeat occupies 233-243; the sequence is PALEDLRQGLL. Repeat 10 spans residues 244–267; sequence PVLESFKVSFLSALEEYTKKLSTQ.

The protein belongs to the apolipoprotein A1/A4/E family. Homodimer. Interacts with APOA1BP and CLU. Component of a sperm activating protein complex (SPAP), consisting of APOA1, an immunoglobulin heavy chain, an immunoglobulin light chain and albumin. Interacts with NDRG1. Interacts with SCGB3A2. Interacts with NAXE and YJEFN3. Post-translationally, glycosylated. Palmitoylated. In terms of processing, phosphorylation sites are present in the extracellular medium. Major protein of plasma HDL, also found in chylomicrons.

It localises to the secreted. Participates in the reverse transport of cholesterol from tissues to the liver for excretion by promoting cholesterol efflux from tissues and by acting as a cofactor for the lecithin cholesterol acyltransferase (LCAT). As part of the SPAP complex, activates spermatozoa motility. The protein is Apolipoprotein A-I (APOA1) of Papio hamadryas (Hamadryas baboon).